The following is a 460-amino-acid chain: GTPase Der (460 aa).

EngA-type G domains lie at 3-167 and 189-364; these read FTFA…PEPD and IRVA…ATWN. GTP is bound by residues 9 to 16, 56 to 60, 119 to 122, 195 to 202, 242 to 246, and 307 to 310; these read GRPNVGKS, DTAGL, NKSE, GRPNAGKS, and NKWD. A KH-like domain is found at 365–449; sequence RRVPTAALNR…PVRIMLREKA (85 aa).

It belongs to the TRAFAC class TrmE-Era-EngA-EngB-Septin-like GTPase superfamily. EngA (Der) GTPase family. As to quaternary structure, associates with the 50S ribosomal subunit.

Functionally, GTPase that plays an essential role in the late steps of ribosome biogenesis. This chain is GTPase Der, found in Rhodopseudomonas palustris (strain BisA53).